The chain runs to 152 residues: Cell division protein SepF (152 aa).

It belongs to the SepF family. As to quaternary structure, homodimer. Interacts with FtsZ.

It localises to the cytoplasm. Cell division protein that is part of the divisome complex and is recruited early to the Z-ring. Probably stimulates Z-ring formation, perhaps through the cross-linking of FtsZ protofilaments. Its function overlaps with FtsA. This Clostridioides difficile (strain 630) (Peptoclostridium difficile) protein is Cell division protein SepF.